The primary structure comprises 363 residues: 3-dehydroquinate synthase (363 aa).

NAD(+) contacts are provided by residues 134-135 (TT), lysine 147, and lysine 156. The Zn(2+) site is built by glutamate 189, histidine 254, and histidine 271.

It belongs to the sugar phosphate cyclases superfamily. Dehydroquinate synthase family. Co(2+) is required as a cofactor. The cofactor is Zn(2+). Requires NAD(+) as cofactor.

It is found in the cytoplasm. The enzyme catalyses 7-phospho-2-dehydro-3-deoxy-D-arabino-heptonate = 3-dehydroquinate + phosphate. Its pathway is metabolic intermediate biosynthesis; chorismate biosynthesis; chorismate from D-erythrose 4-phosphate and phosphoenolpyruvate: step 2/7. Its function is as follows. Catalyzes the conversion of 3-deoxy-D-arabino-heptulosonate 7-phosphate (DAHP) to dehydroquinate (DHQ). This chain is 3-dehydroquinate synthase, found in Prochlorococcus marinus (strain MIT 9215).